The sequence spans 562 residues: Glutamate--tRNA ligase (562 aa).

Residues 90 to 100 carry the 'HIGH' region motif; it reads PNPSGLLHIGH.

The protein belongs to the class-I aminoacyl-tRNA synthetase family. Glutamate--tRNA ligase type 2 subfamily.

The protein localises to the cytoplasm. The catalysed reaction is tRNA(Glu) + L-glutamate + ATP = L-glutamyl-tRNA(Glu) + AMP + diphosphate. Its function is as follows. Catalyzes the attachment of glutamate to tRNA(Glu) in a two-step reaction: glutamate is first activated by ATP to form Glu-AMP and then transferred to the acceptor end of tRNA(Glu). This chain is Glutamate--tRNA ligase, found in Nanoarchaeum equitans (strain Kin4-M).